The following is a 588-amino-acid chain: Aspartate--tRNA ligase (588 aa).

Glu171 is an L-aspartate binding site. An aspartate region spans residues Gln195–Lys198. Arg217 contributes to the L-aspartate binding site. ATP contacts are provided by residues Arg217–Glu219 and Gln226. Residue His447 coordinates L-aspartate. Glu481 is an ATP binding site. An L-aspartate-binding site is contributed by Arg488. Position 533–536 (Gly533–Arg536) interacts with ATP.

It belongs to the class-II aminoacyl-tRNA synthetase family. Type 1 subfamily. Homodimer.

It is found in the cytoplasm. The enzyme catalyses tRNA(Asp) + L-aspartate + ATP = L-aspartyl-tRNA(Asp) + AMP + diphosphate. Its function is as follows. Catalyzes the attachment of L-aspartate to tRNA(Asp) in a two-step reaction: L-aspartate is first activated by ATP to form Asp-AMP and then transferred to the acceptor end of tRNA(Asp). This chain is Aspartate--tRNA ligase, found in Aeromonas salmonicida (strain A449).